The chain runs to 199 residues: Heparin-binding hemagglutinin (199 aa).

The segment covering 162-180 (KAAPAKKAAPAKKAAPAKK) has biased composition (low complexity). The tract at residues 162–199 (KAAPAKKAAPAKKAAPAKKAAAKKAPAKKAAAKKVTQK) is disordered. Residues 181-199 (AAAKKAPAKKAAAKKVTQK) are compositionally biased toward basic residues.

To M.leprae HbhA. Post-translationally, glycosylated. Glycosylation may protect the protein from proteolytic degradation and be important for hemagglutination. It suggests that the carbohydrate moiety may be located within the C-terminal domain of HbhA.

The protein localises to the cell surface. Required for extrapulmonary dissemination. Mediates adherence to epithelial cells by binding to sulfated glycoconjugates present at the surface of these cells. This chain is Heparin-binding hemagglutinin (hbhA), found in Mycobacterium tuberculosis (strain CDC 1551 / Oshkosh).